Consider the following 404-residue polypeptide: Probable tRNA sulfurtransferase (404 aa).

Residues 60–165 (QPIVEALKLV…DEAAYISYEE (106 aa)) form the THUMP domain. ATP-binding positions include 183–184 (ML), 208–209 (HF), Arg265, Gly287, and Gln296.

It belongs to the ThiI family.

It localises to the cytoplasm. It catalyses the reaction [ThiI sulfur-carrier protein]-S-sulfanyl-L-cysteine + a uridine in tRNA + 2 reduced [2Fe-2S]-[ferredoxin] + ATP + H(+) = [ThiI sulfur-carrier protein]-L-cysteine + a 4-thiouridine in tRNA + 2 oxidized [2Fe-2S]-[ferredoxin] + AMP + diphosphate. The catalysed reaction is [ThiS sulfur-carrier protein]-C-terminal Gly-Gly-AMP + S-sulfanyl-L-cysteinyl-[cysteine desulfurase] + AH2 = [ThiS sulfur-carrier protein]-C-terminal-Gly-aminoethanethioate + L-cysteinyl-[cysteine desulfurase] + A + AMP + 2 H(+). It participates in cofactor biosynthesis; thiamine diphosphate biosynthesis. Functionally, catalyzes the ATP-dependent transfer of a sulfur to tRNA to produce 4-thiouridine in position 8 of tRNAs, which functions as a near-UV photosensor. Also catalyzes the transfer of sulfur to the sulfur carrier protein ThiS, forming ThiS-thiocarboxylate. This is a step in the synthesis of thiazole, in the thiamine biosynthesis pathway. The sulfur is donated as persulfide by IscS. The chain is Probable tRNA sulfurtransferase from Streptococcus pyogenes serotype M2 (strain MGAS10270).